A 393-amino-acid chain; its full sequence is Major outer membrane protein P.IA (393 aa).

The first 19 residues, 1–19, serve as a signal peptide directing secretion; it reads MRKKLTALVLSALPLAAVA.

Belongs to the Gram-negative porin family. Homotrimer.

The protein localises to the cell outer membrane. Serves as a slightly cation selective porin. Major antigen on the gonococcal cell surface and it may have pathogenic properties in addition to its porin activity. This Neisseria meningitidis serogroup C protein is Major outer membrane protein P.IA (porA).